A 310-amino-acid polypeptide reads, in one-letter code: Eukaryotic translation initiation factor 3 subunit G (310 aa).

Disordered regions lie at residues 1-32 (MPTE…PVTK) and 179-229 (TGDK…DDNA). The span at 187 to 196 (GAEPEPAQAP) shows a compositional bias: low complexity. The span at 211–229 (GGSRRGESMQPNRRADDNA) shows a compositional bias: basic and acidic residues. The region spanning 229–307 (ATIRVTNLSE…LILNVEWAKP (79 aa)) is the RRM domain.

It belongs to the eIF-3 subunit G family. Component of the eukaryotic translation initiation factor 3 (eIF-3) complex, which is composed of 13 subunits: eif3a, eif3b, eif3c, eif3d, eif3e, eif3f, eif3g, eif3h, eif3i, eif3j, eif3k, eif3l and eif3m.

It localises to the cytoplasm. Functionally, RNA-binding component of the eukaryotic translation initiation factor 3 (eIF-3) complex, which is involved in protein synthesis of a specialized repertoire of mRNAs and, together with other initiation factors, stimulates binding of mRNA and methionyl-tRNAi to the 40S ribosome. The eIF-3 complex specifically targets and initiates translation of a subset of mRNAs involved in cell proliferation. This subunit can bind 18S rRNA. This chain is Eukaryotic translation initiation factor 3 subunit G (eif3g), found in Xenopus tropicalis (Western clawed frog).